A 135-amino-acid polypeptide reads, in one-letter code: Methylglyoxal synthase (135 aa).

One can recognise an MGS-like domain in the interval 1 to 135 (MPKRRRIALI…AQPDPKEIHA (135 aa)). Substrate contacts are provided by residues histidine 12, lysine 16, 38-41 (TGTT), and 58-59 (SG). The active-site Proton donor/acceptor is aspartate 64. Histidine 91 serves as a coordination point for substrate.

The protein belongs to the methylglyoxal synthase family.

The enzyme catalyses dihydroxyacetone phosphate = methylglyoxal + phosphate. Catalyzes the formation of methylglyoxal from dihydroxyacetone phosphate. This Ralstonia nicotianae (strain ATCC BAA-1114 / GMI1000) (Ralstonia solanacearum) protein is Methylglyoxal synthase.